Here is a 349-residue protein sequence, read N- to C-terminus: L-lactate dehydrogenase (349 aa).

A disordered region spans residues 199–219 (APEGSIIGADGNPTTDASTMF).

Belongs to the LDH2/MDH2 oxidoreductase family.

Its subcellular location is the cytoplasm. The catalysed reaction is (S)-lactate + NAD(+) = pyruvate + NADH + H(+). It functions in the pathway fermentation; pyruvate fermentation to lactate; (S)-lactate from pyruvate: step 1/1. The polypeptide is L-lactate dehydrogenase (ldh) (Cupriavidus necator (strain ATCC 17699 / DSM 428 / KCTC 22496 / NCIMB 10442 / H16 / Stanier 337) (Ralstonia eutropha)).